Here is a 104-residue protein sequence, read N- to C-terminus: Large ribosomal subunit protein uL24 (104 aa).

This sequence belongs to the universal ribosomal protein uL24 family. As to quaternary structure, part of the 50S ribosomal subunit.

One of two assembly initiator proteins, it binds directly to the 5'-end of the 23S rRNA, where it nucleates assembly of the 50S subunit. In terms of biological role, one of the proteins that surrounds the polypeptide exit tunnel on the outside of the subunit. This is Large ribosomal subunit protein uL24 from Aliivibrio fischeri (strain ATCC 700601 / ES114) (Vibrio fischeri).